The chain runs to 304 residues: MILQRTLKQAISATGVGLHSGERVKLTLLPAPPDTGIVFRRTDLPEPVDVKVEPSLVNDTRLSSTLVTDTGVRVGTIEHLMSAFAGFGIDNLVVEVTAAEIPIMDGSAAPFLYLLQTAGVVDQPKKKRFIRVKQSVMVEDRGVWVRLDPHDGFKITLSIEFNHPAFNRAPQTVEVDFARHSYMDEISRARTFGFMHEVEYMRNHGLGRGGSLDNAIVIDDEYVLNPEGLRFPDEFVRHKILDAIGDLYIVGHPLIAAFSGHKSGHAMNNRLLRKLLETPEAWEFASFDDPLDAPSSFHQLPPQE.

3 residues coordinate Zn(2+): His-79, His-238, and Asp-242. His-265 (proton donor) is an active-site residue.

The protein belongs to the LpxC family. Zn(2+) is required as a cofactor.

The enzyme catalyses a UDP-3-O-[(3R)-3-hydroxyacyl]-N-acetyl-alpha-D-glucosamine + H2O = a UDP-3-O-[(3R)-3-hydroxyacyl]-alpha-D-glucosamine + acetate. The protein operates within glycolipid biosynthesis; lipid IV(A) biosynthesis; lipid IV(A) from (3R)-3-hydroxytetradecanoyl-[acyl-carrier-protein] and UDP-N-acetyl-alpha-D-glucosamine: step 2/6. Catalyzes the hydrolysis of UDP-3-O-myristoyl-N-acetylglucosamine to form UDP-3-O-myristoylglucosamine and acetate, the committed step in lipid A biosynthesis. The chain is UDP-3-O-acyl-N-acetylglucosamine deacetylase from Chromobacterium violaceum (strain ATCC 12472 / DSM 30191 / JCM 1249 / CCUG 213 / NBRC 12614 / NCIMB 9131 / NCTC 9757 / MK).